A 285-amino-acid chain; its full sequence is Polyamine aminopropyltransferase (285 aa).

A PABS domain is found at 5-241; it reads DNWYIEHFQP…GWWSVTMASK (237 aa). Q35 is a binding site for S-methyl-5'-thioadenosine. Positions 66 and 90 each coordinate spermidine. S-methyl-5'-thioadenosine contacts are provided by residues D110 and 141–142; that span reads DG. Residue D160 is the Proton acceptor of the active site. 160 to 163 serves as a coordination point for spermidine; the sequence is DSTD. P167 provides a ligand contact to S-methyl-5'-thioadenosine.

This sequence belongs to the spermidine/spermine synthase family. Homodimer or homotetramer.

The protein localises to the cytoplasm. The enzyme catalyses S-adenosyl 3-(methylsulfanyl)propylamine + putrescine = S-methyl-5'-thioadenosine + spermidine + H(+). It participates in amine and polyamine biosynthesis; spermidine biosynthesis; spermidine from putrescine: step 1/1. Its function is as follows. Catalyzes the irreversible transfer of a propylamine group from the amino donor S-adenosylmethioninamine (decarboxy-AdoMet) to putrescine (1,4-diaminobutane) to yield spermidine. The polypeptide is Polyamine aminopropyltransferase (Xanthomonas campestris pv. campestris (strain 8004)).